We begin with the raw amino-acid sequence, 605 residues long: NADH-ubiquinone oxidoreductase chain 5 (605 aa).

Helical transmembrane passes span 8–28 (TLLSLLILTVPIMASNFYPYT), 34–54 (IYVKTMVSYAFLVSLIPTMIF), 87–107 (MILMPVALSVTWSIMEFSMWY), 117–137 (FFKYLLLFLITMMLLVTANNL), 140–160 (LFIGWEGVGIMSFLLIGWWYG), 171–191 (AILYNRIGDVGFLVAMAWFLF), 241–261 (TPVSALLHSSTMVVAGIFLLI), 273–293 (IQTMMLCLGAITTLFTAICAL), 301–321 (IVAFSTSSQLGLMMVTVGINQ), 324–344 (LAFLHICTHAFFKAMLFLCSG), 366–386 (LPFTTTALITGSLALTGMPFL), 409–429 (LFITLIATSLTAVYSTRIIYF), 457–477 (LLVGSIFAGFFISNNITPTTI), 482–502 (MPTYLKTTAMLVTLLGFIVAL), and 584–604 (IKLYFLSFLITLTLSLIMLNF).

It belongs to the complex I subunit 5 family. As to quaternary structure, core subunit of respiratory chain NADH dehydrogenase (Complex I) which is composed of 45 different subunits.

Its subcellular location is the mitochondrion inner membrane. It carries out the reaction a ubiquinone + NADH + 5 H(+)(in) = a ubiquinol + NAD(+) + 4 H(+)(out). Its function is as follows. Core subunit of the mitochondrial membrane respiratory chain NADH dehydrogenase (Complex I) which catalyzes electron transfer from NADH through the respiratory chain, using ubiquinone as an electron acceptor. Essential for the catalytic activity and assembly of complex I. This Rousettus amplexicaudatus (Common rousette) protein is NADH-ubiquinone oxidoreductase chain 5 (MT-ND5).